The following is a 368-amino-acid chain: Protein-glutamate methylesterase/protein-glutamine glutaminase 1 (368 aa).

Positions Lys-4–Leu-121 constitute a Response regulatory domain. A 4-aspartylphosphate modification is found at Asp-55. The tract at residues Ser-138 to Ser-176 is disordered. Residues Ser-144–Ser-176 are compositionally biased toward low complexity. In terms of domain architecture, CheB-type methylesterase spans Pro-172–Gln-368. Residues Ser-192, His-219, and Asp-312 contribute to the active site.

Belongs to the CheB family. In terms of processing, phosphorylated by CheA. Phosphorylation of the N-terminal regulatory domain activates the methylesterase activity.

The protein resides in the cytoplasm. It catalyses the reaction [protein]-L-glutamate 5-O-methyl ester + H2O = L-glutamyl-[protein] + methanol + H(+). The catalysed reaction is L-glutaminyl-[protein] + H2O = L-glutamyl-[protein] + NH4(+). Functionally, involved in chemotaxis. Part of a chemotaxis signal transduction system that modulates chemotaxis in response to various stimuli. Catalyzes the demethylation of specific methylglutamate residues introduced into the chemoreceptors (methyl-accepting chemotaxis proteins or MCP) by CheR. Also mediates the irreversible deamidation of specific glutamine residues to glutamic acid. This Pseudomonas aeruginosa (strain ATCC 15692 / DSM 22644 / CIP 104116 / JCM 14847 / LMG 12228 / 1C / PRS 101 / PAO1) protein is Protein-glutamate methylesterase/protein-glutamine glutaminase 1.